The chain runs to 335 residues: Nucleotide-binding protein CYA_0911 (335 aa).

20-27 (GLTGSGKT) provides a ligand contact to ATP. Positions 306-335 (ARFGPPPPAAGVEQQQVRIPLAGVPAPPHD) are disordered.

This sequence belongs to the RapZ-like family.

In terms of biological role, displays ATPase and GTPase activities. In Synechococcus sp. (strain JA-3-3Ab) (Cyanobacteria bacterium Yellowstone A-Prime), this protein is Nucleotide-binding protein CYA_0911.